The following is a 530-amino-acid chain: Purine-cytosine permease FCY22 (530 aa).

Position 46 is a phosphothreonine (T46). 12 helical membrane-spanning segments follow: residues M96–G116, V119–F139, F162–S182, C197–G217, V220–I240, G263–A283, I298–A318, A345–L365, V372–I392, V396–F416, G418–A438, and L463–G483.

It belongs to the purine-cytosine permease (2.A.39) family.

It localises to the membrane. Probable purine-cytosine permease. The polypeptide is Purine-cytosine permease FCY22 (FCY22) (Saccharomyces cerevisiae (strain ATCC 204508 / S288c) (Baker's yeast)).